We begin with the raw amino-acid sequence, 373 residues long: UDP-N-acetylglucosamine--N-acetylmuramyl-(pentapeptide) pyrophosphoryl-undecaprenol N-acetylglucosamine transferase (373 aa).

UDP-N-acetyl-alpha-D-glucosamine-binding positions include 16 to 18 (TGG), Asn-128, Arg-164, Ser-192, Ile-250, and Gln-295.

The protein belongs to the glycosyltransferase 28 family. MurG subfamily.

The protein localises to the cell inner membrane. The catalysed reaction is di-trans,octa-cis-undecaprenyl diphospho-N-acetyl-alpha-D-muramoyl-L-alanyl-D-glutamyl-meso-2,6-diaminopimeloyl-D-alanyl-D-alanine + UDP-N-acetyl-alpha-D-glucosamine = di-trans,octa-cis-undecaprenyl diphospho-[N-acetyl-alpha-D-glucosaminyl-(1-&gt;4)]-N-acetyl-alpha-D-muramoyl-L-alanyl-D-glutamyl-meso-2,6-diaminopimeloyl-D-alanyl-D-alanine + UDP + H(+). It functions in the pathway cell wall biogenesis; peptidoglycan biosynthesis. Cell wall formation. Catalyzes the transfer of a GlcNAc subunit on undecaprenyl-pyrophosphoryl-MurNAc-pentapeptide (lipid intermediate I) to form undecaprenyl-pyrophosphoryl-MurNAc-(pentapeptide)GlcNAc (lipid intermediate II). The chain is UDP-N-acetylglucosamine--N-acetylmuramyl-(pentapeptide) pyrophosphoryl-undecaprenol N-acetylglucosamine transferase from Paraburkholderia phymatum (strain DSM 17167 / CIP 108236 / LMG 21445 / STM815) (Burkholderia phymatum).